Consider the following 408-residue polypeptide: Peptidase T (408 aa).

A Zn(2+)-binding site is contributed by His78. Asp80 is an active-site residue. A Zn(2+)-binding site is contributed by Asp140. Residue Glu173 is the Proton acceptor of the active site. Zn(2+)-binding residues include Glu174, Asp196, and His379.

Belongs to the peptidase M20B family. It depends on Zn(2+) as a cofactor.

The protein resides in the cytoplasm. It carries out the reaction Release of the N-terminal residue from a tripeptide.. Its function is as follows. Cleaves the N-terminal amino acid of tripeptides. In Escherichia coli O9:H4 (strain HS), this protein is Peptidase T.